An 808-amino-acid chain; its full sequence is Protein SEY1 (808 aa).

Residues 1–21 are disordered; that stretch reads MSSELSEGELSHTSSSSSFVP. Topologically, residues 1 to 701 are cytoplasmic; sequence MSSELSEGEL…KRSIVQHITQ (701 aa). A GB1/RHD3-type G domain is found at 57–286; the sequence is GNNYHIISVF…VGDELFKPEY (230 aa). 67–74 is a GTP binding site; it reads GSQSTGKS. Residues 702–722 form a helical membrane-spanning segment; it reads IPYYIYLVIVFLGWNEFMAII. The Lumenal portion of the chain corresponds to 723–725; it reads RNP. A helical transmembrane segment spans residues 726–746; that stretch reads LLFSLALLLGASVYILYKLNL. Residues 747–808 lie on the Cytoplasmic side of the membrane; that stretch reads LKPAIVVAQR…YSDNIELDDM (62 aa).

It belongs to the TRAFAC class dynamin-like GTPase superfamily. GB1/RHD3 GTPase family. RHD3 subfamily.

It localises to the endoplasmic reticulum membrane. Cooperates with the reticulon proteins and tubule-shaping DP1 family proteins to generate and maintain the structure of the tubular endoplasmic reticulum network. Has GTPase activity, which is required for its function in ER organization. This chain is Protein SEY1, found in Candida tropicalis (strain ATCC MYA-3404 / T1) (Yeast).